Reading from the N-terminus, the 342-residue chain is GTPase Obg (342 aa).

The Obg domain maps to 1 to 159; it reads MQFIDRAEIE…RNLRLELKLL (159 aa). In terms of domain architecture, OBG-type G spans 160-328; that stretch reads AEVGIIGLPN…LLQAIWHRLD (169 aa). Residues 166–173, 191–195, 213–216, 280–283, and 309–311 contribute to the GTP site; these read GLPNAGKS, FTTLV, DIPG, NKVD, and SAV. S173 and T193 together coordinate Mg(2+).

Belongs to the TRAFAC class OBG-HflX-like GTPase superfamily. OBG GTPase family. Monomer. It depends on Mg(2+) as a cofactor.

It is found in the cytoplasm. Its function is as follows. An essential GTPase which binds GTP, GDP and possibly (p)ppGpp with moderate affinity, with high nucleotide exchange rates and a fairly low GTP hydrolysis rate. Plays a role in control of the cell cycle, stress response, ribosome biogenesis and in those bacteria that undergo differentiation, in morphogenesis control. This Crocosphaera subtropica (strain ATCC 51142 / BH68) (Cyanothece sp. (strain ATCC 51142)) protein is GTPase Obg.